A 420-amino-acid polypeptide reads, in one-letter code: Maturation protein A2 (420 aa).

3 RNA-binding regions span residues 158 to 176 (IKYLGLLLRRLREGYRAVK), 226 to 236 (QNRHDKIQRLL), and 294 to 298 (PVSDW).

This sequence belongs to the Leviviricetes maturation protein family. As to quaternary structure, interacts with host MurA; this interaction inhibits the first step in host cell wall synthesis. Interacts with the capsid protein.

The protein resides in the virion. In terms of biological role, induces host cell lysis. Inhibits host MurA activity thereby blocking the synthesis of murein precursors necessary for the host cell wall biosynthesis. May be responsible for the attachment to the host pilus. Makes extensive contacts with the viral genome. The sequence is that of Maturation protein A2 from Escherichia virus Qbeta (Bacteriophage Q-beta).